Here is a 140-residue protein sequence, read N- to C-terminus: MTIQYTFSMIKPDAIKRNKIGQVNTYLENAGLKIVAQKMKFLTKYEAACFYDEHRARPFFNSLVEYITSGAVVLQVLKGEDAITLNRTVMGATNPAEAEAGTIRKDLGESIEANSIHGSDSENSAKREIAFFFNKSEIIE.

Residues Lys-11, Phe-59, Arg-87, Thr-93, Arg-104, and Asn-114 each contribute to the ATP site. Residue His-117 is the Pros-phosphohistidine intermediate of the active site.

Belongs to the NDK family. As to quaternary structure, homotetramer. The cofactor is Mg(2+).

It localises to the cytoplasm. The catalysed reaction is a 2'-deoxyribonucleoside 5'-diphosphate + ATP = a 2'-deoxyribonucleoside 5'-triphosphate + ADP. It carries out the reaction a ribonucleoside 5'-diphosphate + ATP = a ribonucleoside 5'-triphosphate + ADP. In terms of biological role, major role in the synthesis of nucleoside triphosphates other than ATP. The ATP gamma phosphate is transferred to the NDP beta phosphate via a ping-pong mechanism, using a phosphorylated active-site intermediate. The polypeptide is Nucleoside diphosphate kinase (Rickettsia peacockii (strain Rustic)).